The following is a 532-amino-acid chain: CTP synthase (532 aa).

The tract at residues 1–267 (MAKFIFVTGG…QDIIIEQLQL (267 aa)) is amidoligase domain. S13 lines the CTP pocket. S13 is a binding site for UTP. Residue 14-19 (GLGKGI) coordinates ATP. Residue Y54 coordinates L-glutamine. D71 is a binding site for ATP. Mg(2+)-binding residues include D71 and E141. CTP contacts are provided by residues 148-150 (DIE), 188-193 (KTKPIQ), and K224. Residues 188 to 193 (KTKPIQ) and K224 contribute to the UTP site. The Glutamine amidotransferase type-1 domain occupies 292–532 (EISFVGKYIE…FIKAIIENNK (241 aa)). G354 contributes to the L-glutamine binding site. C381 functions as the Nucleophile; for glutamine hydrolysis in the catalytic mechanism. Residues 382–385 (LGMQ), E405, and R461 each bind L-glutamine. Residues H506 and E508 contribute to the active site.

The protein belongs to the CTP synthase family. As to quaternary structure, homotetramer.

The enzyme catalyses UTP + L-glutamine + ATP + H2O = CTP + L-glutamate + ADP + phosphate + 2 H(+). The catalysed reaction is L-glutamine + H2O = L-glutamate + NH4(+). It carries out the reaction UTP + NH4(+) + ATP = CTP + ADP + phosphate + 2 H(+). Its pathway is pyrimidine metabolism; CTP biosynthesis via de novo pathway; CTP from UDP: step 2/2. With respect to regulation, allosterically activated by GTP, when glutamine is the substrate; GTP has no effect on the reaction when ammonia is the substrate. The allosteric effector GTP functions by stabilizing the protein conformation that binds the tetrahedral intermediate(s) formed during glutamine hydrolysis. Inhibited by the product CTP, via allosteric rather than competitive inhibition. Functionally, catalyzes the ATP-dependent amination of UTP to CTP with either L-glutamine or ammonia as the source of nitrogen. Regulates intracellular CTP levels through interactions with the four ribonucleotide triphosphates. The polypeptide is CTP synthase (Mycoplasma capricolum subsp. capricolum (strain California kid / ATCC 27343 / NCTC 10154)).